The primary structure comprises 434 residues: Histidinol dehydrogenase (434 aa).

Positions 242, 264, and 267 each coordinate substrate. Residues glutamine 264 and histidine 267 each contribute to the Zn(2+) site. Catalysis depends on proton acceptor residues glutamate 332 and histidine 333. Residues histidine 333, aspartate 366, glutamate 420, and histidine 425 each contribute to the substrate site. Aspartate 366 provides a ligand contact to Zn(2+). Zn(2+) is bound at residue histidine 425.

It belongs to the histidinol dehydrogenase family. Requires Zn(2+) as cofactor.

It carries out the reaction L-histidinol + 2 NAD(+) + H2O = L-histidine + 2 NADH + 3 H(+). The protein operates within amino-acid biosynthesis; L-histidine biosynthesis; L-histidine from 5-phospho-alpha-D-ribose 1-diphosphate: step 9/9. Catalyzes the sequential NAD-dependent oxidations of L-histidinol to L-histidinaldehyde and then to L-histidine. This is Histidinol dehydrogenase from Desulfotalea psychrophila (strain LSv54 / DSM 12343).